The following is a 93-amino-acid chain: Stromal cell-derived factor 1 (93 aa).

The first 21 residues, 1 to 21 (MDAKVVAVLALVLAALCLSDG), serve as a signal peptide directing secretion. The Receptor activation motif motif lies at 22–23 (KP). Residues 29–33 (RCPCR) are receptor and heparin binding. Disulfide bonds link C30/C55 and C32/C71. Receptor binding stretches follow at residues 39 to 41 (VAR), 48 to 50 (KIL), and 60 to 70 (VARLKNNNRQV). Heparin-binding positions include 41 to 51 (RANVKHLKILN), R62, Q69, and K85.

The protein belongs to the intercrine alpha (chemokine CxC) family. Monomer or homodimer; in equilibrium. Dimer formation is induced by non acidic pH and the presence of multivalent anions, and by binding to CXCR4 or heparin. Monomeric form is required for full chemotactic activity and resistance to ischemia/reperfusion injury, whereas the dimeric form acts as a partial agonist of CXCR4, stimulating Ca2+ mobilization but with no chemotactic activity and instead acts as a selective antagonist that blocks chemotaxis induced by the monomeric form. Interacts with the N-terminus of ACKR3. Interacts with integrin subunit ITGB3 (via the allosteric site (site 2)). Interacts with TNFAIP6 (via Link domain).

The protein resides in the secreted. Chemoattractant active on T-lymphocytes and monocytes but not neutrophils. Activates the C-X-C chemokine receptor CXCR4 to induce a rapid and transient rise in the level of intracellular calcium ions and chemotaxis. Also binds to atypical chemokine receptor ACKR3, which activates the beta-arrestin pathway and acts as a scavenger receptor for SDF-1. Acts as a positive regulator of monocyte migration and a negative regulator of monocyte adhesion via the LYN kinase. Binds to the allosteric site (site 2) of integrins and activates integrins ITGAV:ITGB3, ITGA4:ITGB1 and ITGA5:ITGB1 in a CXCR4-independent manner. Stimulates migration of monocytes and T-lymphocytes through its receptors, CXCR4 and ACKR3, and decreases monocyte adherence to surfaces coated with ICAM-1, a ligand for beta-2 integrins. SDF1A/CXCR4 signaling axis inhibits beta-2 integrin LFA-1 mediated adhesion of monocytes to ICAM-1 through LYN kinase. Plays a protective role after myocardial infarction. Has several critical functions during embryonic development; required for B-cell lymphopoiesis, myelopoiesis in bone marrow and heart ventricular septum formation. Stimulates the proliferation of bone marrow-derived B-cell progenitors in the presence of IL7 as well as growth of stromal cell-dependent pre-B-cells. This is Stromal cell-derived factor 1 (CXCL12) from Felis catus (Cat).